The chain runs to 783 residues: Polyribonucleotide nucleotidyltransferase 1, mitochondrial (783 aa).

Residues 1-45 (MAACRYCCSCLRLRPLSDGPFLLPRRDRALTQLQVRALWSSAGSR) constitute a mitochondrion transit peptide. K250, K264, K285, and K289 each carry N6-acetyllysine. Residue K552 is modified to N6-succinyllysine. The 60-residue stretch at 605–664 (PVVETVQVPLSKRAKFVGPGGYNLKKLQAETGVTISQVDEETFSVFAPTPSAMHEARDFI) folds into the KH domain. The S1 motif domain maps to 679 to 750 (GAVYTATITE…ADGRMRLSRK (72 aa)). Phosphoserine is present on residues S754 and S782.

The protein belongs to the polyribonucleotide nucleotidyltransferase family. As to quaternary structure, homotrimer; in free form. Homooligomer. Component of the mitochondrial degradosome (mtEXO) complex which is a heteropentamer containing 2 copies of SUPV3L1 and 3 copies of PNPT1. As part of the mitochondrial degradosome complex, interacts with GRSF1 in an RNA-dependent manner; the interaction enhances the activity of the complex. Interacts with TCL1A; the interaction has no effect on PNPT1 exonuclease activity.

The protein resides in the cytoplasm. It localises to the mitochondrion matrix. The protein localises to the mitochondrion intermembrane space. The enzyme catalyses RNA(n+1) + phosphate = RNA(n) + a ribonucleoside 5'-diphosphate. Functionally, RNA-binding protein implicated in numerous RNA metabolic processes. Catalyzes the phosphorolysis of single-stranded polyribonucleotides processively in the 3'-to-5' direction. Mitochondrial intermembrane factor with RNA-processing exoribonulease activity. Component of the mitochondrial degradosome (mtEXO) complex, that degrades 3' overhang double-stranded RNA with a 3'-to-5' directionality in an ATP-dependent manner. Involved in the degradation of non-coding mitochondrial transcripts (MT-ncRNA) and tRNA-like molecules. Required for correct processing and polyadenylation of mitochondrial mRNAs. Plays a role as a cytoplasmic RNA import factor that mediates the translocation of small RNA components, like the 5S RNA, the RNA subunit of ribonuclease P and the mitochondrial RNA-processing (MRP) RNA, into the mitochondrial matrix. Plays a role in mitochondrial morphogenesis and respiration; regulates the expression of the electron transport chain (ETC) components at the mRNA and protein levels. In the cytoplasm, shows a 3'-to-5' exoribonuclease mediating mRNA degradation activity; degrades c-myc mRNA upon treatment with IFNB1/IFN-beta, resulting in a growth arrest in melanoma cells. Regulates the stability of specific mature miRNAs in melanoma cells; specifically and selectively degrades miR-221, preferentially. Also plays a role in RNA cell surveillance by cleaning up oxidized RNAs. Binds to the RNA subunit of ribonuclease P, MRP RNA and miR-221 microRNA. This Homo sapiens (Human) protein is Polyribonucleotide nucleotidyltransferase 1, mitochondrial.